The primary structure comprises 593 residues: Probable tripeptidyl-peptidase SED3 (593 aa).

The first 18 residues, 1–18 (MLLRWHSVIPLFLAMTVA), serve as a signal peptide directing secretion. A propeptide spans 19–198 (FPNTYRTVVE…NLQAIYLSTN (180 aa)) (removed in mature form). N-linked (GlcNAc...) asparagine glycans are attached at residues asparagine 204, asparagine 261, and asparagine 275. The 387-residue stretch at 206–592 (TITPRCLREL…RILAKIVQHM (387 aa)) folds into the Peptidase S53 domain. Catalysis depends on charge relay system residues glutamate 282 and aspartate 286. The N-linked (GlcNAc...) asparagine glycan is linked to asparagine 295. The Charge relay system role is filled by serine 496. The Ca(2+) site is built by aspartate 538 and isoleucine 539. N-linked (GlcNAc...) asparagine glycans are attached at residues asparagine 554 and asparagine 566. Glycine 570 and aspartate 572 together coordinate Ca(2+).

It depends on Ca(2+) as a cofactor.

Its subcellular location is the secreted. The protein resides in the extracellular space. It catalyses the reaction Release of an N-terminal tripeptide from a polypeptide.. Functionally, secreted tripeptidyl-peptidase which degrades proteins at acidic pHs and is involved in virulence. This is Probable tripeptidyl-peptidase SED3 (SED3) from Arthroderma benhamiae (strain ATCC MYA-4681 / CBS 112371) (Trichophyton mentagrophytes).